The following is a 158-amino-acid chain: Transcription elongation factor GreA (158 aa).

This sequence belongs to the GreA/GreB family.

Necessary for efficient RNA polymerase transcription elongation past template-encoded arresting sites. The arresting sites in DNA have the property of trapping a certain fraction of elongating RNA polymerases that pass through, resulting in locked ternary complexes. Cleavage of the nascent transcript by cleavage factors such as GreA or GreB allows the resumption of elongation from the new 3'terminus. GreA releases sequences of 2 to 3 nucleotides. This chain is Transcription elongation factor GreA, found in Acinetobacter baumannii (strain SDF).